Here is a 659-residue protein sequence, read N- to C-terminus: Nicastrin (659 aa).

The N-terminal stretch at 1–22 (MKIKNYFIIVFIIIVLSTDVIS) is a signal peptide. The Extracellular portion of the chain corresponds to 23 to 627 (SQSSIEDKMY…LFQVGSYANE (605 aa)). Residues Asn94, Asn172, Asn305, Asn389, Asn451, Asn475, Asn550, Asn553, and Asn600 are each glycosylated (N-linked (GlcNAc...) asparagine). The chain crosses the membrane as a helical span at residues 628 to 648 (IWFLVSGLIELLLSVGIIFYI). Over 649-659 (KKYLSKRYKLL) the chain is Cytoplasmic.

It belongs to the nicastrin family. As to quaternary structure, homodimer. Component of the gamma-secretase complex, a complex composed of a presenilin homodimer, nicastrin, aph1 and pen2.

The protein resides in the membrane. Functionally, essential subunit of the gamma-secretase complex, an endoprotease complex that catalyzes the intramembrane cleavage of integral membrane proteins such as Notch receptors and APP (amyloid-beta precursor protein). It probably represents a stabilizing cofactor required for the assembly of the gamma-secretase complex. In Dictyostelium discoideum (Social amoeba), this protein is Nicastrin (ncstn).